The primary structure comprises 183 residues: Ribulose bisphosphate carboxylase small subunit, chloroplastic 1 (183 aa).

The transit peptide at 1-58 (MASSMLSNAAMATTAATAGAQASMVAPFNGLKSFATFPITKKSSNDFSSLPSNGGRVQ) directs the protein to the chloroplast.

It belongs to the RuBisCO small chain family. In terms of assembly, heterohexadecamer of 8 large and 8 small subunits.

It localises to the plastid. The protein resides in the chloroplast. Its function is as follows. RuBisCO catalyzes two reactions: the carboxylation of D-ribulose 1,5-bisphosphate, the primary event in carbon dioxide fixation, as well as the oxidative fragmentation of the pentose substrate. Both reactions occur simultaneously and in competition at the same active site. Although the small subunit is not catalytic it is essential for maximal activity. The polypeptide is Ribulose bisphosphate carboxylase small subunit, chloroplastic 1 (Amaranthus hypochondriacus (Prince-of-Wales feather)).